Here is a 372-residue protein sequence, read N- to C-terminus: Aminomethyltransferase (372 aa).

It belongs to the GcvT family. As to quaternary structure, the glycine cleavage system is composed of four proteins: P, T, L and H.

The catalysed reaction is N(6)-[(R)-S(8)-aminomethyldihydrolipoyl]-L-lysyl-[protein] + (6S)-5,6,7,8-tetrahydrofolate = N(6)-[(R)-dihydrolipoyl]-L-lysyl-[protein] + (6R)-5,10-methylene-5,6,7,8-tetrahydrofolate + NH4(+). The glycine cleavage system catalyzes the degradation of glycine. This is Aminomethyltransferase from Streptomyces coelicolor (strain ATCC BAA-471 / A3(2) / M145).